The sequence spans 359 residues: 5-amino-6-(D-ribitylamino)uracil--L-tyrosine 4-hydroxyphenyl transferase (359 aa).

A Radical SAM core domain is found at 45–282 (VTYVVNANIN…VYAISRIFFK (238 aa)). [4Fe-4S] cluster-binding residues include C59, C63, and C66.

Belongs to the radical SAM superfamily. CofH family. Consists of two subunits, CofG and CofH. It depends on [4Fe-4S] cluster as a cofactor.

It carries out the reaction 5-amino-6-(D-ribitylamino)uracil + L-tyrosine + S-adenosyl-L-methionine = 5-amino-5-(4-hydroxybenzyl)-6-(D-ribitylimino)-5,6-dihydrouracil + 2-iminoacetate + 5'-deoxyadenosine + L-methionine + H(+). It participates in cofactor biosynthesis; coenzyme F0 biosynthesis. Functionally, catalyzes the radical-mediated synthesis of 5-amino-5-(4-hydroxybenzyl)-6-(D-ribitylimino)-5,6-dihydrouracil from 5-amino-6-(D-ribitylamino)uracil and L-tyrosine. The sequence is that of 5-amino-6-(D-ribitylamino)uracil--L-tyrosine 4-hydroxyphenyl transferase from Methanococcus maripaludis (strain C7 / ATCC BAA-1331).